A 487-amino-acid polypeptide reads, in one-letter code: 2-succinylbenzoate--CoA ligase (487 aa).

The protein belongs to the ATP-dependent AMP-binding enzyme family. MenE subfamily.

It carries out the reaction 2-succinylbenzoate + ATP + CoA = 2-succinylbenzoyl-CoA + AMP + diphosphate. The protein operates within quinol/quinone metabolism; 1,4-dihydroxy-2-naphthoate biosynthesis; 1,4-dihydroxy-2-naphthoate from chorismate: step 5/7. It functions in the pathway quinol/quinone metabolism; menaquinone biosynthesis. Functionally, converts 2-succinylbenzoate (OSB) to 2-succinylbenzoyl-CoA (OSB-CoA). This Bacillus velezensis (strain DSM 23117 / BGSC 10A6 / LMG 26770 / FZB42) (Bacillus amyloliquefaciens subsp. plantarum) protein is 2-succinylbenzoate--CoA ligase.